A 76-amino-acid chain; its full sequence is MLKELINKLLWHPGYNPEDYVIKYLHRGAENDEKSVPLQNIVIEDSFLFFDETHIPFHRILEIVNLKNGEILYKKR.

The protein belongs to the UPF0248 family.

This Methanococcus maripaludis (strain C6 / ATCC BAA-1332) protein is UPF0248 protein MmarC6_0667.